Consider the following 216-residue polypeptide: Adenylate kinase (216 aa).

10–15 is a binding site for ATP; it reads GAGKGT. Residues 30 to 59 are NMP; the sequence is STGDMLRAAVKAGTPLGLELKKVMDAGQLV. AMP contacts are provided by residues Thr-31, Arg-36, 57–59, 85–88, and Gln-92; these read QLV and GFPR. The tract at residues 122-159 is LID; the sequence is GRRVHLASGRTYHIQYNPPKVEGKDDVTGEDLIQRDDD. ATP-binding positions include Arg-123 and 132–133; that span reads TY. Residues Arg-156 and Arg-167 each coordinate AMP. Gly-202 is a binding site for ATP.

Belongs to the adenylate kinase family. As to quaternary structure, monomer.

The protein resides in the cytoplasm. It carries out the reaction AMP + ATP = 2 ADP. It functions in the pathway purine metabolism; AMP biosynthesis via salvage pathway; AMP from ADP: step 1/1. Its function is as follows. Catalyzes the reversible transfer of the terminal phosphate group between ATP and AMP. Plays an important role in cellular energy homeostasis and in adenine nucleotide metabolism. In Pseudomonas putida (strain GB-1), this protein is Adenylate kinase.